Here is a 340-residue protein sequence, read N- to C-terminus: Phosphate acyltransferase (340 aa).

This sequence belongs to the PlsX family. In terms of assembly, homodimer. Probably interacts with PlsY.

It localises to the cytoplasm. It catalyses the reaction a fatty acyl-[ACP] + phosphate = an acyl phosphate + holo-[ACP]. Its pathway is lipid metabolism; phospholipid metabolism. Its function is as follows. Catalyzes the reversible formation of acyl-phosphate (acyl-PO(4)) from acyl-[acyl-carrier-protein] (acyl-ACP). This enzyme utilizes acyl-ACP as fatty acyl donor, but not acyl-CoA. This chain is Phosphate acyltransferase, found in Pseudomonas syringae pv. tomato (strain ATCC BAA-871 / DC3000).